Here is a 411-residue protein sequence, read N- to C-terminus: Dihydrofolate synthase/folylpolyglutamate synthase (411 aa).

53–56 (GKGT) serves as a coordination point for ATP. Residue Ser77 coordinates Mg(2+). Residues 116–119 (TYFE) and 147–149 (LDA) contribute to the 7,8-dihydropteroate site. Position 167 (His167) interacts with Mg(2+). Residues Arg283 and Asp296 each coordinate ATP.

This sequence belongs to the folylpolyglutamate synthase family. In terms of assembly, monomer. Mg(2+) is required as a cofactor.

It catalyses the reaction 7,8-dihydropteroate + L-glutamate + ATP = 7,8-dihydrofolate + ADP + phosphate + H(+). The catalysed reaction is (6S)-5,6,7,8-tetrahydrofolyl-(gamma-L-Glu)(n) + L-glutamate + ATP = (6S)-5,6,7,8-tetrahydrofolyl-(gamma-L-Glu)(n+1) + ADP + phosphate + H(+). It carries out the reaction 10-formyltetrahydrofolyl-(gamma-L-Glu)(n) + L-glutamate + ATP = 10-formyltetrahydrofolyl-(gamma-L-Glu)(n+1) + ADP + phosphate + H(+). The enzyme catalyses (6R)-5,10-methylenetetrahydrofolyl-(gamma-L-Glu)(n) + L-glutamate + ATP = (6R)-5,10-methylenetetrahydrofolyl-(gamma-L-Glu)(n+1) + ADP + phosphate + H(+). Its pathway is cofactor biosynthesis; tetrahydrofolate biosynthesis; 7,8-dihydrofolate from 2-amino-4-hydroxy-6-hydroxymethyl-7,8-dihydropteridine diphosphate and 4-aminobenzoate: step 2/2. The protein operates within cofactor biosynthesis; tetrahydrofolylpolyglutamate biosynthesis. Its function is as follows. Functions in two distinct reactions of the de novo folate biosynthetic pathway. Catalyzes the addition of a glutamate residue to dihydropteroate (7,8-dihydropteroate or H2Pte) to form dihydrofolate (7,8-dihydrofolate monoglutamate or H2Pte-Glu). Also catalyzes successive additions of L-glutamate to tetrahydrofolate or 10-formyltetrahydrofolate or 5,10-methylenetetrahydrofolate, leading to folylpolyglutamate derivatives. This Buchnera aphidicola subsp. Acyrthosiphon pisum (strain APS) (Acyrthosiphon pisum symbiotic bacterium) protein is Dihydrofolate synthase/folylpolyglutamate synthase (folC).